The chain runs to 341 residues: Malate dehydrogenase 2, mitochondrial (341 aa).

The transit peptide at methionine 1–phenylalanine 22 directs the protein to the mitochondrion. NAD(+) is bound by residues glycine 36 to glycine 42 and aspartate 62. Residues arginine 109 and arginine 115 each coordinate substrate. NAD(+) is bound by residues asparagine 122 and isoleucine 145–asparagine 147. 2 residues coordinate substrate: asparagine 147 and arginine 181. Residue histidine 205 is the Proton acceptor of the active site. Methionine 256 contacts NAD(+).

This sequence belongs to the LDH/MDH superfamily. MDH type 1 family. As to quaternary structure, homodimer. As to expression, expressed in rosette leaves at low levels.

The protein resides in the mitochondrion matrix. The enzyme catalyses (S)-malate + NAD(+) = oxaloacetate + NADH + H(+). Catalyzes a reversible NAD-dependent dehydrogenase reaction involved in central metabolism and redox homeostasis between organelle compartments. Required for carbon dioxide and energy partitioning in leaves. May limit photorespiration during the dark phase. Can convert 2-ketoglutarate to L-2-hydroxyglutarate in vitro. The chain is Malate dehydrogenase 2, mitochondrial from Arabidopsis thaliana (Mouse-ear cress).